Consider the following 143-residue polypeptide: MNTYTVKANDIKRDWHVIDASGRVLGEVAAEAAKYLMGKHKPMFCRNLDCGDYVVIVNAKKITVTGNKLDQKMYYRHSGFPGGFRQEKLGDLLKTKPLFVIEHAVKGMIPRNTLGAQILAKLKVYEGAEHPHASQTGVVSKES.

Belongs to the universal ribosomal protein uL13 family. Part of the 50S ribosomal subunit.

Its function is as follows. This protein is one of the early assembly proteins of the 50S ribosomal subunit, although it is not seen to bind rRNA by itself. It is important during the early stages of 50S assembly. This chain is Large ribosomal subunit protein uL13, found in Dehalococcoides mccartyi (strain CBDB1).